The following is a 266-amino-acid chain: Non-structural maintenance of chromosomes element 1 homolog (266 aa).

Residues 1 to 102 (MQGNTRRTGV…SVSKMASDFA (102 aa)) form an interaction with NSMCE3 region. The RING-type; atypical zinc-finger motif lies at 191–232 (CNICRSLLIQGQSCETCGIRMHLPCVAKYFQSSSEPHCPHCN). The segment covering 243-252 (FDPEKERETG) has biased composition (basic and acidic residues). Positions 243–266 (FDPEKERETGMSRSNKRPSRSRQH) are disordered. A compositionally biased stretch (basic residues) spans 256-266 (SNKRPSRSRQH).

Belongs to the NSE1 family. Component of the SMC5-SMC6 complex which consists at least of SMC5, SMC6, NSMCE2, NSMCE1, NSMCE4A or EID3 and NSMCE3. NSMCE1, NSMCE4A or EID3 and NSMCE3 probably form a subcomplex that bridges the head domains of the SMC5-SMC6 heterodimer. Interacts with NSMCE3. Ubiquitinated.

The protein localises to the nucleus. It localises to the chromosome. Its subcellular location is the telomere. The catalysed reaction is S-ubiquitinyl-[E2 ubiquitin-conjugating enzyme]-L-cysteine + [acceptor protein]-L-lysine = [E2 ubiquitin-conjugating enzyme]-L-cysteine + N(6)-ubiquitinyl-[acceptor protein]-L-lysine.. Its function is as follows. RING-type zinc finger-containing E3 ubiquitin ligase that assembles with melanoma antigen protein (MAGE) to catalyze the direct transfer of ubiquitin from E2 ubiquitin-conjugating enzyme to a specific substrate. Within MAGE-RING ubiquitin ligase complex, MAGE stimulates and specifies ubiquitin ligase activity likely through recruitment and/or stabilization of the E2 ubiquitin-conjugating enzyme at the E3:substrate complex. Involved in maintenance of genome integrity, DNA damage response and DNA repair. NSMCE3/MAGEG1 and NSMCE1 ubiquitin ligase are components of SMC5-SMC6 complex and may positively regulate homologous recombination-mediated DNA repair. The protein is Non-structural maintenance of chromosomes element 1 homolog (NSMCE1) of Bos taurus (Bovine).